The following is a 130-amino-acid chain: General stress protein 13 (130 aa).

Residues 8–77 (GSVYTGKVTG…EKGKISLSIR (70 aa)) enclose the S1 motif domain. The interval 76-109 (IRATQAAPEKKESKPRKPKAAQVSEEASTPQGFN) is disordered. The span at 100–109 (EEASTPQGFN) shows a compositional bias: polar residues.

As to quaternary structure, found in association with the 30S subunit of the ribosome.

It localises to the cytoplasm. The sequence is that of General stress protein 13 (yugI) from Bacillus subtilis (strain 168).